Consider the following 203-residue polypeptide: Dephospho-CoA kinase (203 aa).

The DPCK domain occupies 6–203 (KVAITGGLSC…ELYQELKIYI (198 aa)). An ATP-binding site is contributed by 14-19 (SCGKSS).

This sequence belongs to the CoaE family.

The protein resides in the cytoplasm. The enzyme catalyses 3'-dephospho-CoA + ATP = ADP + CoA + H(+). It participates in cofactor biosynthesis; coenzyme A biosynthesis; CoA from (R)-pantothenate: step 5/5. Its function is as follows. Catalyzes the phosphorylation of the 3'-hydroxyl group of dephosphocoenzyme A to form coenzyme A. In Protochlamydia amoebophila (strain UWE25), this protein is Dephospho-CoA kinase.